The sequence spans 92 residues: Acylphosphatase (92 aa).

Residues 3-92 (TKHVLVSGIV…GPRSTHFEVT (90 aa)) form the Acylphosphatase-like domain. Residues Arg18 and Asn36 contribute to the active site.

The protein belongs to the acylphosphatase family.

It carries out the reaction an acyl phosphate + H2O = a carboxylate + phosphate + H(+). The protein is Acylphosphatase (acyP) of Alcanivorax borkumensis (strain ATCC 700651 / DSM 11573 / NCIMB 13689 / SK2).